We begin with the raw amino-acid sequence, 199 residues long: Inner membrane-spanning protein YciB (199 aa).

The next 6 helical transmembrane spans lie at 7 to 27 (HPLFKLATELGPLLVFFAANA), 32 to 52 (FVATAAFMVAIVAAMIASYVV), 56 to 76 (IPLMALVTGIVVIVFGTLTLV), 93 to 113 (LFAGVLGGGLLFGRSFIAIMF), 126 to 146 (VLTLRWALFFFGMAILNELIW), and 153 to 173 (FWVNFKVFGAVPLTMIFAMMQ).

The protein belongs to the YciB family.

It is found in the cell inner membrane. Functionally, plays a role in cell envelope biogenesis, maintenance of cell envelope integrity and membrane homeostasis. This Nitrobacter hamburgensis (strain DSM 10229 / NCIMB 13809 / X14) protein is Inner membrane-spanning protein YciB.